The chain runs to 393 residues: Acetylornithine aminotransferase (393 aa).

Pyridoxal 5'-phosphate-binding positions include 100 to 101 (GT) and Phe132. Arg135 is a binding site for N(2)-acetyl-L-ornithine. 217–220 (DEIQ) contacts pyridoxal 5'-phosphate. Lys246 carries the N6-(pyridoxal phosphate)lysine modification. Position 275 (Ser275) interacts with N(2)-acetyl-L-ornithine. Thr276 provides a ligand contact to pyridoxal 5'-phosphate.

The protein belongs to the class-III pyridoxal-phosphate-dependent aminotransferase family. ArgD subfamily. Homodimer. Pyridoxal 5'-phosphate serves as cofactor.

Its subcellular location is the cytoplasm. The catalysed reaction is N(2)-acetyl-L-ornithine + 2-oxoglutarate = N-acetyl-L-glutamate 5-semialdehyde + L-glutamate. It functions in the pathway amino-acid biosynthesis; L-arginine biosynthesis; N(2)-acetyl-L-ornithine from L-glutamate: step 4/4. The sequence is that of Acetylornithine aminotransferase from Campylobacter jejuni subsp. jejuni serotype O:2 (strain ATCC 700819 / NCTC 11168).